The primary structure comprises 309 residues: MGSSLSEPCIYDKLSESIDILRQSGYRYGMSEREIEKFIKQVLETNEPRREPPQFPILRATVKFVVAVGVVLMAVLVFTYPQSPVLMGSVSGTTLNNSSPLSHIRLLELPIAEKYNLHGFHEWWASSSLQTMDLNCSACTDVTDILELTDQLRTSAGEHTRTQPLLLKGGAALSLRVSQMDQFSSVSQTPANFTLLWSVSSRPRESVLQWLFPESERCPLLEIWSSTLQRCRLSSRRPQPSRVQVLGWMVVADGSPDVRLLPVQRCRKHCRSFSLRLEPGDMVFADSQIWLMELSPSGAQDVQCDSAVL.

Residues 1–59 are Cytoplasmic-facing; the sequence is MGSSLSEPCIYDKLSESIDILRQSGYRYGMSEREIEKFIKQVLETNEPRREPPQFPILR. Residues 60–80 traverse the membrane as a helical segment; that stretch reads ATVKFVVAVGVVLMAVLVFTY. The Extracellular segment spans residues 81 to 309; the sequence is PQSPVLMGSV…QDVQCDSAVL (229 aa).

As to quaternary structure, homodimer.

It is found in the golgi apparatus membrane. The protein localises to the cytoplasm. Its function is as follows. Exhibits histone deacetylase (HDAC) enhancer properties. May play a role in progression through the cell cycle. This chain is Bombesin receptor-activated protein C6orf89 homolog, found in Danio rerio (Zebrafish).